We begin with the raw amino-acid sequence, 513 residues long: ATP synthase subunit alpha (513 aa).

169–176 (GDRQTGKT) contributes to the ATP binding site.

The protein belongs to the ATPase alpha/beta chains family. F-type ATPases have 2 components, CF(1) - the catalytic core - and CF(0) - the membrane proton channel. CF(1) has five subunits: alpha(3), beta(3), gamma(1), delta(1), epsilon(1). CF(0) has three main subunits: a(1), b(2) and c(9-12). The alpha and beta chains form an alternating ring which encloses part of the gamma chain. CF(1) is attached to CF(0) by a central stalk formed by the gamma and epsilon chains, while a peripheral stalk is formed by the delta and b chains.

Its subcellular location is the cell inner membrane. The catalysed reaction is ATP + H2O + 4 H(+)(in) = ADP + phosphate + 5 H(+)(out). Functionally, produces ATP from ADP in the presence of a proton gradient across the membrane. The alpha chain is a regulatory subunit. The chain is ATP synthase subunit alpha from Shewanella sp. (strain MR-4).